Here is a 504-residue protein sequence, read N- to C-terminus: Maturase K (504 aa).

The protein belongs to the intron maturase 2 family. MatK subfamily.

It localises to the plastid. It is found in the chloroplast. Functionally, usually encoded in the trnK tRNA gene intron. Probably assists in splicing its own and other chloroplast group II introns. This chain is Maturase K, found in Quercus lyrata (Overcup oak).